The chain runs to 1391 residues: MNAITQRDSKSFTGRKRIRKSFARIGDVVPMPNLIDVQRASYEAFLQMNVHPDNRTPTGLQEVFRSVFPIDDFAGRGRLEFVNYELEEPKYDVEECIQRGMTFAAPLKVILRLIVWDVDEDTGSRSIRDIKEQPVYMGDMPLMTDNGTFIINGTERVIVSQMHRSPGVFFDHDKGKTHSSGKFLFAARVIPYRGSWLDFEFDSKDLVYVRIDRRRKLPVTTLLYALEGQRTEAAIASGTDPQDLPEIHGMTAEEILSYFYTQVVFTSTPKGWARPFDPEAFRGITLAEALIDADTGTVVAEAGTKLTARSARKIAEQAKTVLVGRADLLGRYMAEDLVNDQTGEIYAEAGEELTEARLAALETLGVTSLPTLAVDQTTGPWIRNTLAIDKNSTRDDALIDIYRVMRPGEPPTPETAEALFRGLFFDMDRYDLSSVGRVKMNMRLGVDAPDTVRTLRKEDILRTVKILCDLKDGRGAIDDIDNLGNRRVRSVGELMENQYRLGLLRMERAIRERMGSVDIDTVMPHDLINAKPAAAAVREFFGSSQLSQFMDQTNPLSEVTHKRRLSALGPGGLTRERAGFEVRDVHPTHYGRICPIETPEGPNIGLINSLATYAKVNKYGFIETPYRMVEDGKVSDQWRYLSAMEEDRLVVAQADAPRDSTGKLTEELISVRRQGDFRLVKPEDVTSMDVSPKQLVSVAAALIPFLENDDANRALMGSNMQRQAVPLIRADAPLVGTGMEAAVARDSGATIVARRAGVVDQIDGARIVVRASGEDGATQGVDIYRLRKFMRSNQSTCINQRPLVKVGDHVISGDIIADGPSTELGELALGRNVLCAFMPWNGYNFEDSILISERIARDDVFTSIHIEEFEVMARDTKLGQEEITRDIPNVGEEALRNLDEAGIVYIGAEVNPGDILVGKVTPKGESPMTPEEKLLRAIFGEKASDVRDTSLKLPPGTTGTIVDVRVFSRRGVDKDERAMAIERAEIERLAKDRDDERGIQERAFLNRLREKLMGHPASGGFKGIKAGTIITDEVLAEHPRGAWRNISVQDDAVVADIELLKREFDAAVAKIQARFEGKVEKLQRGDELPPGVMKMVKVFVAVKRKLQPGDKMAGRHGNKGVVSRVVPVEDMPFLEDGTPVDLVLNPLGVPSRMNVGQILETHLGWACANLGRQIGELVEDYRRNGQQRDELLSRLREIYGENVYNDVIADMNNDQLIELAENLRKGVPIATPVFDGARPSDIENMLSRAGLDTSGQVVLTDGRTGEPFERKVTVGYIYMLKLHHLVDDKIHARSIGPYSLVTQQPLGGKAQFGGQRFGEMEVWALEAYGAAYTLQEMLTVKSDDVSGRTKVYEAIVRDQDSFEAGIPESFNVLMKELKSLGLNVDLENRSA.

This sequence belongs to the RNA polymerase beta chain family. The RNAP catalytic core consists of 2 alpha, 1 beta, 1 beta' and 1 omega subunit. When a sigma factor is associated with the core the holoenzyme is formed, which can initiate transcription.

It carries out the reaction RNA(n) + a ribonucleoside 5'-triphosphate = RNA(n+1) + diphosphate. DNA-dependent RNA polymerase catalyzes the transcription of DNA into RNA using the four ribonucleoside triphosphates as substrates. The polypeptide is DNA-directed RNA polymerase subunit beta (Granulibacter bethesdensis (strain ATCC BAA-1260 / CGDNIH1)).